The sequence spans 83 residues: Conotoxin LiCr95 (83 aa).

An N-terminal signal peptide occupies residues 1–22; that stretch reads MKLTCALIVAMLFLTACQLTTT. The propeptide occupies 23–50; that stretch reads DDSRGRQKYPTERLRVKMRNPKLSKLTK. Disulfide bonds link Cys52–Cys67, Cys59–Cys71, and Cys66–Cys80.

This sequence belongs to the conotoxin O1 superfamily. Expressed by the venom duct.

It is found in the secreted. The chain is Conotoxin LiCr95 from Conus lividus (Livid cone).